Here is a 1171-residue protein sequence, read N- to C-terminus: DNA-directed RNA polymerase subunit beta (1171 aa).

Belongs to the RNA polymerase beta chain family. As to quaternary structure, the RNAP catalytic core consists of 2 alpha, 1 beta, 1 beta' and 1 omega subunit. When a sigma factor is associated with the core the holoenzyme is formed, which can initiate transcription.

It carries out the reaction RNA(n) + a ribonucleoside 5'-triphosphate = RNA(n+1) + diphosphate. In terms of biological role, DNA-dependent RNA polymerase catalyzes the transcription of DNA into RNA using the four ribonucleoside triphosphates as substrates. The protein is DNA-directed RNA polymerase subunit beta of Kineococcus radiotolerans (strain ATCC BAA-149 / DSM 14245 / SRS30216).